A 188-amino-acid chain; its full sequence is Elongation factor P-like protein (188 aa).

This sequence belongs to the elongation factor P family.

The sequence is that of Elongation factor P-like protein from Xylella fastidiosa (strain 9a5c).